A 119-amino-acid chain; its full sequence is Large ribosomal subunit protein bL19 (119 aa).

The protein belongs to the bacterial ribosomal protein bL19 family.

In terms of biological role, this protein is located at the 30S-50S ribosomal subunit interface and may play a role in the structure and function of the aminoacyl-tRNA binding site. This Treponema denticola (strain ATCC 35405 / DSM 14222 / CIP 103919 / JCM 8153 / KCTC 15104) protein is Large ribosomal subunit protein bL19.